Here is a 163-residue protein sequence, read N- to C-terminus: Putative 4-hydroxy-4-methyl-2-oxoglutarate aldolase (163 aa).

Residues 76 to 79 and Arg-98 each bind substrate; that span reads GDMI. Asp-99 contributes to the a divalent metal cation binding site.

It belongs to the class II aldolase/RraA-like family. Homotrimer. Requires a divalent metal cation as cofactor.

It catalyses the reaction 4-hydroxy-4-methyl-2-oxoglutarate = 2 pyruvate. The enzyme catalyses oxaloacetate + H(+) = pyruvate + CO2. Functionally, catalyzes the aldol cleavage of 4-hydroxy-4-methyl-2-oxoglutarate (HMG) into 2 molecules of pyruvate. Also contains a secondary oxaloacetate (OAA) decarboxylase activity due to the common pyruvate enolate transition state formed following C-C bond cleavage in the retro-aldol and decarboxylation reactions. This Pseudomonas fluorescens (strain SBW25) protein is Putative 4-hydroxy-4-methyl-2-oxoglutarate aldolase.